The following is a 370-amino-acid chain: Seipin (370 aa).

An N-terminal signal peptide occupies residues 1-18 (MNILLRLIVFALDPLGLG). The Cytoplasmic segment spans residues 19 to 55 (RRFLIRPAVNLGWNVYDRVRSKADEKVGTVRELVLRL). The helical transmembrane segment at 56–76 (GLIAFAVVLIIWLAVFMYAAF) threads the bilayer. Residues 77–251 (YYVYMPAISH…GLRYIMFNWP (175 aa)) are Lumenal-facing. The helical transmembrane segment at 252–272 (VLSAIVAISTNLFFILVVFLL) threads the bilayer. Over 273-370 (SWYHWSDAKW…RPTKKTTADH (98 aa)) the chain is Cytoplasmic. The tract at residues 346-370 (KSRSGKRESPDALRKRPTKKTTADH) is disordered. A compositionally biased stretch (basic and acidic residues) spans 350 to 359 (GKRESPDALR).

Widely expressed, with highest levels detected in fat body, moderate levels detected in salivary gland, midgut and muscle, and weak expression detected in brain.

It is found in the endoplasmic reticulum membrane. It localises to the lipid droplet. Its function is as follows. Acts as a tissue-autonomous lipid modulator, preventing ectopic lipid accumulation in salivary gland (a non-adipose tissue) and in promoting lipid storage in fat tissue. Required for the growth and maturation of small nascent lipid droplets (LDs) into larger mature LDs. The sequence is that of Seipin from Drosophila melanogaster (Fruit fly).